The chain runs to 227 residues: RNA pyrophosphohydrolase (227 aa).

Positions 6–149 (GFRPNVGIIL…KRDVYQMALT (144 aa)) constitute a Nudix hydrolase domain. A Nudix box motif is present at residues 38–59 (GGIKYGETPEQAMYRELHEEIG). Residues 165-227 (PYGTHGAHGA…PVSTTRSTDD (63 aa)) form a disordered region. Positions 192 to 201 (AQAAQQADAD) are enriched in low complexity. Positions 217–227 (TPVSTTRSTDD) are enriched in polar residues.

The protein belongs to the Nudix hydrolase family. RppH subfamily. A divalent metal cation is required as a cofactor.

Functionally, accelerates the degradation of transcripts by removing pyrophosphate from the 5'-end of triphosphorylated RNA, leading to a more labile monophosphorylated state that can stimulate subsequent ribonuclease cleavage. The chain is RNA pyrophosphohydrolase from Cupriavidus taiwanensis (strain DSM 17343 / BCRC 17206 / CCUG 44338 / CIP 107171 / LMG 19424 / R1) (Ralstonia taiwanensis (strain LMG 19424)).